We begin with the raw amino-acid sequence, 1210 residues long: Epidermal growth factor receptor (1210 aa).

Positions 1–24 (MRPSGTAGAALLALLAALCPASRA) are cleaved as a signal peptide. Residues 25–645 (LEEKKVCQGT…CPTNGPKIPS (621 aa)) are Extracellular-facing. C31 and C58 are oxidised to a cystine. An N-linked (GlcNAc...) (complex) asparagine; atypical; partial glycan is attached at N56. N73 carries an N-linked (GlcNAc...) asparagine; atypical glycan. The Approximate repeat unit spans residues 75–300 (DLSFLKTIQE…CVKKCPRNYV (226 aa)). N-linked (GlcNAc...) asparagine glycosylation is found at N128, N175, and N196. Disulfide bonds link C157-C187, C190-C199, C194-C207, C215-C223, C219-C231, C232-C240, C236-C248, C251-C260, C264-C291, C295-C307, C311-C326, C329-C333, and C337-C362. S229 carries the phosphoserine modification. 4 N-linked (GlcNAc...) asparagine glycosylation sites follow: N352, N361, N413, and N444. One copy of the Approximate repeat lies at 390–600 (QELDILKTVK…CVKTCPAGVM (211 aa)). Cystine bridges form between C470-C499, C506-C515, C510-C523, C526-C535, C539-C555, C558-C571, C562-C579, C582-C591, C595-C617, C620-C628, and C624-C636. N528 carries an N-linked (GlcNAc...) asparagine glycan. N568 is a glycosylation site (N-linked (GlcNAc...) asparagine; partial). N-linked (GlcNAc...) asparagine; partial glycosylation is present at N603. A glycan (N-linked (GlcNAc...) (high mannose) asparagine) is linked at N623. The helical transmembrane segment at 646–668 (IATGMVGALLLLLVVALGIGLFM) threads the bilayer. At 669–1210 (RRRHIVRKRT…APQSSEFIGA (542 aa)) the chain is on the cytoplasmic side. Position 678 is a phosphothreonine; by PKC and PKD/PRKD1 (T678). Residues 688-704 (LVEPLTPSGEAPNQALL) form an important for dimerization, phosphorylation and activation region. Position 693 is a phosphothreonine; by PKD/PRKD1 (T693). S695 carries the phosphoserine modification. In terms of domain architecture, Protein kinase spans 712–979 (FKKIKVLGSG…KMARDPQRYL (268 aa)). K716 participates in a covalent cross-link: Glycyl lysine isopeptide (Lys-Gly) (interchain with G-Cter in ubiquitin). 718-726 (LGSGAFGTV) is a binding site for ATP. A Glycyl lysine isopeptide (Lys-Gly) (interchain with G-Cter in ubiquitin) cross-link involves residue K737. Residue K745 participates in ATP binding. K745 carries the post-translational modification N6-(2-hydroxyisobutyryl)lysine. Residues K754 and K757 each participate in a glycyl lysine isopeptide (Lys-Gly) (interchain with G-Cter in ubiquitin) cross-link. 790–791 (TQ) lines the ATP pocket. The active-site Proton acceptor is the D837. Residue D855 participates in ATP binding. A Glycyl lysine isopeptide (Lys-Gly) (interchain with G-Cter in ubiquitin) cross-link involves residue K867. Y869 is modified (phosphotyrosine). Residues K929, K960, and K970 each participate in a glycyl lysine isopeptide (Lys-Gly) (interchain with G-Cter in ubiquitin) cross-link. A phosphoserine mark is found at S991 and S995. Phosphotyrosine; by autocatalysis occurs at positions 998 and 1016. S1026 and S1039 each carry phosphoserine. Phosphothreonine is present on T1041. Position 1042 is a phosphoserine (S1042). C1049 is lipidated: S-palmitoyl cysteine. S1064 carries the phosphoserine modification. Position 1069 is a phosphotyrosine (Y1069). 3 positions are modified to phosphoserine: S1070, S1071, and S1081. Phosphotyrosine; by autocatalysis is present on residues Y1092 and Y1110. A disordered region spans residues 1097 to 1137 (VPKRPAGSVQNPVYHNQPLNPAPSRDPHYQDPHSTAVGNPE). 2 stretches are compositionally biased toward polar residues: residues 1104-1115 (SVQNPVYHNQPL) and 1128-1137 (PHSTAVGNPE). The S-palmitoyl cysteine moiety is linked to residue C1146. Position 1166 is a phosphoserine (S1166). A phosphotyrosine; by autocatalysis mark is found at Y1172 and Y1197. R1199 bears the Omega-N-methylarginine mark.

It belongs to the protein kinase superfamily. Tyr protein kinase family. EGF receptor subfamily. In terms of assembly, binding of the ligand triggers homo- and/or heterodimerization of the receptor triggering its autophosphorylation. Heterodimer with ERBB2. Forms a complex with CCDC88A/GIV (via SH2-like regions) and GNAI3 which leads to enhanced EGFR signaling and triggering of cell migration; binding to CCDC88A requires autophosphorylation of the EGFR C-terminal region, and ligand stimulation is required for recruitment of GNAI3 to the complex. Interacts with ERRFI1; inhibits dimerization of the kinase domain and autophosphorylation. Part of a complex with ERBB2 and either PIK3C2A or PIK3C2B. Interacts with GRB2; an adapter protein coupling the receptor to downstream signaling pathways. Interacts with GAB2; involved in signaling downstream of EGFR. Interacts with STAT3; mediates EGFR downstream signaling in cell proliferation. Interacts with RIPK1; involved in NF-kappa-B activation. Interacts (autophosphorylated) with CBL, CBLB and CBLC; involved in EGFR ubiquitination and regulation; interaction with CBL is reduced in the presence of tensin TNS4. Interacts with SOCS5; regulates EGFR degradation through ELOC- and ELOB-mediated ubiquitination and proteasomal degradation. Interacts with PRMT5; methylates EGFR and enhances interaction with PTPN6. Interacts (phosphorylated) with PTPN6; inhibits EGFR-dependent activation of MAPK/ERK. Interacts with COPG1; essential for regulation of EGF-dependent nuclear transport of EGFR by retrograde trafficking from the Golgi to the ER. Interacts with TNK2; this interaction is dependent on EGF stimulation and kinase activity of EGFR. Interacts with PCNA; positively regulates PCNA. Interacts with PELP1. Interacts with MUC1. Interacts with AP2M1. Interacts with FER. May interact with EPS8; mediates EPS8 phosphorylation. Interacts (via SH2 domains) with GRB2, NCK1 and NCK2. Interacts with ATXN2. Interacts with GAREM1. Interacts (ubiquitinated) with ANKRD13A/B/D; the interaction is direct and may regulate EGFR internalization after EGF stimulation. Interacts with GPER1; the interaction occurs in an estrogen-dependent manner. Interacts (via C-terminal cytoplasmic kinase domain) with ZPR1 (via zinc fingers). Interacts with RNF115 and RNF126. Interacts with GPRC5A (via its transmembrane domain). Interacts with FAM83B; positively regulates EGFR inducing its autophosphorylation in absence of stimulation by EGF. Interacts with LAPTM4B; positively correlates with EGFR activation. Interacts with STX19. Interacts with CD44. Interacts with PGRMC1; the interaction requires PGRMC1 homodimerization. Interacts with PIKFYVE. Interacts with NEU3. Interacts with TRAF4. Interacts with the ant venom OMEGA-myrmeciitoxin(02)-Mg1a. Interacts with CD82; this interaction facilitates ligand-induced endocytosis of the receptor and its subsequent desensitization. Post-translationally, phosphorylated on Tyr residues in response to EGF. Phosphorylation at Ser-695 is partial and occurs only if Thr-693 is phosphorylated. Phosphorylation at Thr-678 and Thr-693 by PRKD1 inhibits EGF-induced MAPK8/JNK1 activation. Dephosphorylation by PTPRJ prevents endocytosis and stabilizes the receptor at the plasma membrane. Autophosphorylation at Tyr-1197 is stimulated by methylation at Arg-1199 and enhances interaction with PTPN6. Autophosphorylation at Tyr-1092 and/or Tyr-1110 recruits STAT3. Dephosphorylated by PTPN1 and PTPN2. Monoubiquitinated and polyubiquitinated upon EGF stimulation; which does not affect tyrosine kinase activity or signaling capacity but may play a role in lysosomal targeting. Polyubiquitin linkage is mainly through 'Lys-63', but linkage through 'Lys-48', 'Lys-11' and 'Lys-29' also occurs. Deubiquitination by OTUD7B prevents degradation. Ubiquitinated by RNF115 and RNF126. Ubiquitinated by ZNRF1 or CBL at different lysines in response to EGF stimulation; leading to recruitment of the ESCRT machinery and subsequent degradation in the lysosomes. Deubiquitinated by UCHL1 leading to the inhibition of its degradation. In terms of processing, palmitoylated on Cys residues by ZDHHC20. Palmitoylation inhibits internalization after ligand binding, and increases the persistence of tyrosine-phosphorylated EGFR at the cell membrane. Palmitoylation increases the amplitude and duration of EGFR signaling. Post-translationally, methylated. Methylation at Arg-1199 by PRMT5 stimulates phosphorylation at Tyr-1197. As to expression, ubiquitously expressed. Isoform 2 is also expressed in ovarian cancers.

The protein resides in the cell membrane. The protein localises to the endoplasmic reticulum membrane. It is found in the golgi apparatus membrane. Its subcellular location is the nucleus membrane. It localises to the endosome. The protein resides in the endosome membrane. The protein localises to the nucleus. It is found in the secreted. It carries out the reaction L-tyrosyl-[protein] + ATP = O-phospho-L-tyrosyl-[protein] + ADP + H(+). With respect to regulation, endocytosis and inhibition of the activated EGFR by phosphatases like PTPRJ and PTPRK constitute immediate regulatory mechanisms. Upon EGF-binding phosphorylates EPS15 that regulates EGFR endocytosis and activity. Moreover, inducible feedback inhibitors including LRIG1, SOCS4, SOCS5 and ERRFI1 constitute alternative regulatory mechanisms for the EGFR signaling. Up-regulated by NEU3-mediated desialylation of N-linked glycan at Asn-528. Receptor tyrosine kinase binding ligands of the EGF family and activating several signaling cascades to convert extracellular cues into appropriate cellular responses. Known ligands include EGF, TGFA/TGF-alpha, AREG, epigen/EPGN, BTC/betacellulin, epiregulin/EREG and HBEGF/heparin-binding EGF. Ligand binding triggers receptor homo- and/or heterodimerization and autophosphorylation on key cytoplasmic residues. The phosphorylated receptor recruits adapter proteins like GRB2 which in turn activates complex downstream signaling cascades. Activates at least 4 major downstream signaling cascades including the RAS-RAF-MEK-ERK, PI3 kinase-AKT, PLCgamma-PKC and STATs modules. May also activate the NF-kappa-B signaling cascade. Also directly phosphorylates other proteins like RGS16, activating its GTPase activity and probably coupling the EGF receptor signaling to the G protein-coupled receptor signaling. Also phosphorylates MUC1 and increases its interaction with SRC and CTNNB1/beta-catenin. Positively regulates cell migration via interaction with CCDC88A/GIV which retains EGFR at the cell membrane following ligand stimulation, promoting EGFR signaling which triggers cell migration. Plays a role in enhancing learning and memory performance. Plays a role in mammalian pain signaling (long-lasting hypersensitivity). Its function is as follows. Isoform 2 may act as an antagonist of EGF action. In terms of biological role, (Microbial infection) Acts as a receptor for hepatitis C virus (HCV) in hepatocytes and facilitates its cell entry. Mediates HCV entry by promoting the formation of the CD81-CLDN1 receptor complexes that are essential for HCV entry and by enhancing membrane fusion of cells expressing HCV envelope glycoproteins. This chain is Epidermal growth factor receptor, found in Homo sapiens (Human).